We begin with the raw amino-acid sequence, 149 residues long: MSSEAKMVDISQKETVLREAEAEGFIKLKNDTIKRIIENEIEKGNVITVAKTAGIMAAKKTSELLPLCHLIPLENVDIDIKIENSGIRVRSKVKAHYKTGVEMEALVATSISLLTIWDMVKKYEKDENGKYPYTMIDDIKVIDKIKEKD.

Substrate-binding positions include 67-69 (LCH) and 103-104 (ME). Aspartate 118 is an active-site residue.

The protein belongs to the MoaC family. Homohexamer; trimer of dimers.

It carries out the reaction (8S)-3',8-cyclo-7,8-dihydroguanosine 5'-triphosphate = cyclic pyranopterin phosphate + diphosphate. It functions in the pathway cofactor biosynthesis; molybdopterin biosynthesis. In terms of biological role, catalyzes the conversion of (8S)-3',8-cyclo-7,8-dihydroguanosine 5'-triphosphate to cyclic pyranopterin monophosphate (cPMP). This chain is Probable cyclic pyranopterin monophosphate synthase, found in Saccharolobus solfataricus (strain ATCC 35092 / DSM 1617 / JCM 11322 / P2) (Sulfolobus solfataricus).